A 68-amino-acid chain; its full sequence is Neuronal regeneration-related protein (68 aa).

Positions 22–54 (EGRLPKGRLPVPKEVNRKKNDETNAASLTPLGS) are disordered. Residues 44-54 (TNAASLTPLGS) show a composition bias toward polar residues. A Phosphoserine modification is found at Ser59.

Interacts with the latency-associated peptides (LAP) of TGFB1 and TGFB2; the interaction results in a decrease in TGFB autoinduction. Interacts with FLNA. Phosphorylated on Ser-59. Phosphorylation decreases stability and activity. In terms of tissue distribution, expressed in lung (at protein level).

It is found in the cytoplasm. May have roles in neural function. Ectopic expression augments motility of gliomas. Also promotes axonal regeneration. May also have functions in cellular differentiation. Induces differentiation of fibroblast into myofibroblast and myofibroblast ameboid migration. Increases retinoic-acid regulation of lipid-droplet biogenesis. Down-regulates the expression of TGFB1 and TGFB2 but not of TGFB3. May play a role in the regulation of alveolar generation. This Homo sapiens (Human) protein is Neuronal regeneration-related protein (NREP).